A 108-amino-acid polypeptide reads, in one-letter code: UPF0060 membrane protein YE2027 (108 aa).

The next 4 helical transmembrane spans lie at 6–26, 29–49, 59–79, and 85–105; these read LLFF…YLWL, GASM…VWLL, VYAA…RVVD, and LFDW…VAGW.

Belongs to the UPF0060 family.

The protein localises to the cell inner membrane. The chain is UPF0060 membrane protein YE2027 from Yersinia enterocolitica serotype O:8 / biotype 1B (strain NCTC 13174 / 8081).